Here is a 786-residue protein sequence, read N- to C-terminus: Neprilysin-3 (786 aa).

Topologically, residues 1–52 (MTRYKQTEFTEDDSSSIGGIQLNEATGHTGMQIRYHTARATWNWRSRNKTEK) are cytoplasmic. Residues 53 to 73 (WLLITTFVMAITIFTLLIVLF) traverse the membrane as a helical; Signal-anchor for type II membrane protein segment. At 74 to 786 (TDGGSSDATK…MNPTEKCEVW (713 aa)) the chain is on the extracellular side. One can recognise a Peptidase M13 domain in the interval 102–786 (PCLNKHCIFA…MNPTEKCEVW (685 aa)). 5 cysteine pairs are disulfide-bonded: cysteine 103–cysteine 108, cysteine 126–cysteine 771, cysteine 134–cysteine 731, cysteine 190–cysteine 450, and cysteine 659–cysteine 783. Residues asparagine 216, asparagine 226, asparagine 256, asparagine 279, asparagine 305, asparagine 325, asparagine 356, asparagine 388, asparagine 496, and asparagine 569 are each glycosylated (N-linked (GlcNAc...) asparagine). Residue histidine 622 coordinates Zn(2+). The active site involves glutamate 623. Zn(2+) contacts are provided by histidine 626 and glutamate 682. The active-site Proton donor is aspartate 686. Asparagine 715 is a glycosylation site (N-linked (GlcNAc...) asparagine).

Belongs to the peptidase M13 family. It depends on Zn(2+) as a cofactor.

The protein localises to the cell membrane. It carries out the reaction Preferential cleavage of polypeptides between hydrophobic residues, particularly with Phe or Tyr at P1'.. In terms of biological role, metalloendoprotease which is required in the dorsal paired medial neurons for the proper formation of long-term (LTM) and middle-term memories (MTM). Also required in the mushroom body neurons where it functions redundantly with neprilysins Nep2 and Nep4 in normal LTM formation. The chain is Neprilysin-3 from Drosophila melanogaster (Fruit fly).